The primary structure comprises 85 residues: CRISPR-associated endoribonuclease Cas2 (85 aa).

Residue Asp8 participates in Mg(2+) binding.

This sequence belongs to the CRISPR-associated endoribonuclease Cas2 protein family. As to quaternary structure, homodimer, forms a heterotetramer with a Cas1 homodimer. Requires Mg(2+) as cofactor.

Functionally, CRISPR (clustered regularly interspaced short palindromic repeat), is an adaptive immune system that provides protection against mobile genetic elements (viruses, transposable elements and conjugative plasmids). CRISPR clusters contain sequences complementary to antecedent mobile elements and target invading nucleic acids. CRISPR clusters are transcribed and processed into CRISPR RNA (crRNA). Functions as a ssRNA-specific endoribonuclease. Involved in the integration of spacer DNA into the CRISPR cassette. In Pyrococcus furiosus (strain ATCC 43587 / DSM 3638 / JCM 8422 / Vc1), this protein is CRISPR-associated endoribonuclease Cas2.